A 353-amino-acid chain; its full sequence is Protein RecA (353 aa).

Glycine 75–threonine 82 is a binding site for ATP.

The protein belongs to the RecA family.

It localises to the cytoplasm. Its function is as follows. Can catalyze the hydrolysis of ATP in the presence of single-stranded DNA, the ATP-dependent uptake of single-stranded DNA by duplex DNA, and the ATP-dependent hybridization of homologous single-stranded DNAs. It interacts with LexA causing its activation and leading to its autocatalytic cleavage. The polypeptide is Protein RecA (Cupriavidus necator (Alcaligenes eutrophus)).